The sequence spans 462 residues: Glutamate decarboxylase alpha (462 aa).

Lys273 carries the N6-(pyridoxal phosphate)lysine modification.

Belongs to the group II decarboxylase family. The cofactor is pyridoxal 5'-phosphate.

It carries out the reaction L-glutamate + H(+) = 4-aminobutanoate + CO2. Converts internalized glutamate to GABA and increases the internal pH. Involved in glutamate-dependent acid resistance in gastric fluid. This Listeria monocytogenes serovar 1/2a (strain ATCC BAA-679 / EGD-e) protein is Glutamate decarboxylase alpha (gadA).